We begin with the raw amino-acid sequence, 130 residues long: Small ribosomal subunit protein uS9 (130 aa).

This sequence belongs to the universal ribosomal protein uS9 family.

This is Small ribosomal subunit protein uS9 from Pseudomonas paraeruginosa (strain DSM 24068 / PA7) (Pseudomonas aeruginosa (strain PA7)).